We begin with the raw amino-acid sequence, 338 residues long: Glycerol-3-phosphate dehydrogenase [NAD(P)+] (338 aa).

Positions 13, 14, and 108 each coordinate NADPH. 3 residues coordinate sn-glycerol 3-phosphate: lysine 108, glycine 139, and serine 141. Alanine 143 lines the NADPH pocket. Sn-glycerol 3-phosphate contacts are provided by lysine 194, aspartate 247, serine 257, arginine 258, and asparagine 259. Lysine 194 functions as the Proton acceptor in the catalytic mechanism. Arginine 258 contributes to the NADPH binding site. NADPH contacts are provided by valine 282 and glutamate 284.

Belongs to the NAD-dependent glycerol-3-phosphate dehydrogenase family.

The protein resides in the cytoplasm. It carries out the reaction sn-glycerol 3-phosphate + NAD(+) = dihydroxyacetone phosphate + NADH + H(+). It catalyses the reaction sn-glycerol 3-phosphate + NADP(+) = dihydroxyacetone phosphate + NADPH + H(+). It functions in the pathway membrane lipid metabolism; glycerophospholipid metabolism. Catalyzes the reduction of the glycolytic intermediate dihydroxyacetone phosphate (DHAP) to sn-glycerol 3-phosphate (G3P), the key precursor for phospholipid synthesis. The protein is Glycerol-3-phosphate dehydrogenase [NAD(P)+] of Streptococcus pneumoniae (strain P1031).